The primary structure comprises 599 residues: Elongation factor 4 (599 aa).

The region spanning 2-184 (KNIRNFSIIA…RLVRDIPPPE (183 aa)) is the tr-type G domain. GTP-binding positions include 14 to 19 (DHGKST) and 131 to 134 (NKID).

It belongs to the TRAFAC class translation factor GTPase superfamily. Classic translation factor GTPase family. LepA subfamily.

The protein resides in the cell inner membrane. It carries out the reaction GTP + H2O = GDP + phosphate + H(+). Its function is as follows. Required for accurate and efficient protein synthesis under certain stress conditions. May act as a fidelity factor of the translation reaction, by catalyzing a one-codon backward translocation of tRNAs on improperly translocated ribosomes. Back-translocation proceeds from a post-translocation (POST) complex to a pre-translocation (PRE) complex, thus giving elongation factor G a second chance to translocate the tRNAs correctly. Binds to ribosomes in a GTP-dependent manner. The protein is Elongation factor 4 of Klebsiella pneumoniae subsp. pneumoniae (strain ATCC 700721 / MGH 78578).